The following is a 262-amino-acid chain: Expansin-A7 (262 aa).

The signal sequence occupies residues 1-30; the sequence is MGPISSSWSFNKFFSIVFVVFAISGEFVAG. The region spanning 55–167 is the Expansin-like EG45 domain; sequence GGACGYGNLF…RRVPCQRSGG (113 aa). 3 cysteine pairs are disulfide-bonded: Cys-58-Cys-86, Cys-89-Cys-162, and Cys-94-Cys-100. Positions 177–257 constitute an Expansin-like CBD domain; the sequence is YWLLIFVMNV…NWSGGKTYKS (81 aa).

Belongs to the expansin family. Expansin A subfamily.

It localises to the secreted. Its subcellular location is the cell wall. It is found in the membrane. Functionally, causes loosening and extension of plant cell walls by disrupting non-covalent bonding between cellulose microfibrils and matrix glucans. No enzymatic activity has been found. The sequence is that of Expansin-A7 (EXPA7) from Arabidopsis thaliana (Mouse-ear cress).